Consider the following 429-residue polypeptide: Ribosomal RNA small subunit methyltransferase B (429 aa).

S-adenosyl-L-methionine is bound by residues 254-260 (CAAPGGK), Asp277, Asp303, and Asp322. Catalysis depends on Cys375, which acts as the Nucleophile.

It belongs to the class I-like SAM-binding methyltransferase superfamily. RsmB/NOP family.

The protein localises to the cytoplasm. It carries out the reaction cytidine(967) in 16S rRNA + S-adenosyl-L-methionine = 5-methylcytidine(967) in 16S rRNA + S-adenosyl-L-homocysteine + H(+). Functionally, specifically methylates the cytosine at position 967 (m5C967) of 16S rRNA. In Erwinia tasmaniensis (strain DSM 17950 / CFBP 7177 / CIP 109463 / NCPPB 4357 / Et1/99), this protein is Ribosomal RNA small subunit methyltransferase B.